The sequence spans 365 residues: sn-glycerol-3-phosphate import ATP-binding protein UgpC (365 aa).

The ABC transporter domain occupies 4-234; sequence LSLRNVQKHY…PASTFVAGFI (231 aa). 36 to 43 contacts ATP; it reads GPSGCGKS.

This sequence belongs to the ABC transporter superfamily. sn-glycerol-3-phosphate importer (TC 3.A.1.1.3) family. In terms of assembly, the complex is composed of two ATP-binding proteins (UgpC), two transmembrane proteins (UgpA and UgpE) and a solute-binding protein (UgpB).

It localises to the cell inner membrane. The enzyme catalyses sn-glycerol 3-phosphate(out) + ATP + H2O = sn-glycerol 3-phosphate(in) + ADP + phosphate + H(+). Its function is as follows. Part of the ABC transporter complex UgpBAEC involved in sn-glycerol-3-phosphate (G3P) import. Responsible for energy coupling to the transport system. This is sn-glycerol-3-phosphate import ATP-binding protein UgpC from Ralstonia nicotianae (strain ATCC BAA-1114 / GMI1000) (Ralstonia solanacearum).